A 292-amino-acid chain; its full sequence is Elongation factor Ts (292 aa).

Residues 80–83 (TDFV) form an involved in Mg(2+) ion dislocation from EF-Tu region.

It belongs to the EF-Ts family.

It localises to the cytoplasm. Its function is as follows. Associates with the EF-Tu.GDP complex and induces the exchange of GDP to GTP. It remains bound to the aminoacyl-tRNA.EF-Tu.GTP complex up to the GTP hydrolysis stage on the ribosome. The protein is Elongation factor Ts of Ralstonia pickettii (strain 12J).